The chain runs to 226 residues: 7-cyano-7-deazaguanine synthase (226 aa).

ATP is bound at residue 10–20; the sequence is LSGGLDSATAA. Zn(2+) contacts are provided by cysteine 191, cysteine 199, cysteine 202, and cysteine 205.

It belongs to the QueC family. The cofactor is Zn(2+).

It carries out the reaction 7-carboxy-7-deazaguanine + NH4(+) + ATP = 7-cyano-7-deazaguanine + ADP + phosphate + H2O + H(+). Its pathway is purine metabolism; 7-cyano-7-deazaguanine biosynthesis. Its function is as follows. Catalyzes the ATP-dependent conversion of 7-carboxy-7-deazaguanine (CDG) to 7-cyano-7-deazaguanine (preQ(0)). The sequence is that of 7-cyano-7-deazaguanine synthase from Synechococcus sp. (strain CC9902).